We begin with the raw amino-acid sequence, 171 residues long: MDKKSLYKYLLLRSTGDMHKAKSPTIMTRVTNNVYLGNYKNAMDAPSSEVKFKYVLNLTMDKYTLPNSNINIIHIPLVDDTTTDISKYFDDVTAFLSKCDQRNEPVLVHCAAGVNRSGAMILAYLMSKNKESLPMLYFLYVYHSMRDLRGAFVENPSFKRQIIEKYVIDKN.

Positions 1–27 (MDKKSLYKYLLLRSTGDMHKAKSPTIM) are dimerization. Positions 23 to 171 (SPTIMTRVTN…IIEKYVIDKN (149 aa)) constitute a Tyrosine-protein phosphatase domain. The active-site Phosphocysteine intermediate is the C110.

It belongs to the protein-tyrosine phosphatase family. Non-receptor class dual specificity subfamily. In terms of assembly, homodimer.

Its subcellular location is the virion. It localises to the host cytoplasm. The catalysed reaction is O-phospho-L-tyrosyl-[protein] + H2O = L-tyrosyl-[protein] + phosphate. The enzyme catalyses O-phospho-L-seryl-[protein] + H2O = L-seryl-[protein] + phosphate. Its function is as follows. Serine/tyrosine phosphatase which down-regulates cellular antiviral response by dephosphorylating activated host STAT1 and blocking interferon (IFN)-stimulated innate immune responses. Dephosphorylates the OPG144 protein. This Bos taurus (Bovine) protein is Dual specificity protein phosphatase OPG106 (OPG106).